The sequence spans 553 residues: MYGKSGPPPEGYVPQHPPAQGYAPHNPPPGYVHENPFQEPVPQGQEYSPQGQQYQFRKDQYYNLDHQGSGAPIGDASFEDKFPTEAGNRLKFNDWPFTIIFLLTVGAFIAVAVLTLRGWSLSPTSNGSGIYDGDNTHTLNTNAAILLLISCGVAVALSVFGLVLAGMYTKFFIYAAMILNTVVGLGTAITYLVLRHWSAGIVFMIFTILTAVCYWLMRSRIPFSVAVLRTVMSVMKKHPQTWLVSLLGTIVSAAFSVIFSVVLVATYIKYDPKSENGGCDVSGGSCSRGKLIGILVLVFFCGFYISEVIRNVIHCTIAGIYGCWYYFSKSDQGMPRWPAFGSLKRALTTSFGSICFGSLIVSLIQLLRQIIQLLRNGIISGISDSGWMQCLWLILDAVVGVFEWMAEYFNHYAYCFIALYGKPYLRAAKETWHMLREKGIDALINDNLINLALGFYTLFVGYTTALFSYLFLRFTKPDYNSGGGFNAVLMAFSFLIAIQLTHVATETIRSGTATFFVALGNDPEIFRVSYPQRFDEIFRAYPDVLNKLSHQHV.

Positions 1–17 (MYGKSGPPPEGYVPQHP) are enriched in pro residues. Residues 1-49 (MYGKSGPPPEGYVPQHPPAQGYAPHNPPPGYVHENPFQEPVPQGQEYSP) are disordered. Residues 1 to 95 (MYGKSGPPPE…AGNRLKFNDW (95 aa)) are Cytoplasmic-facing. The chain crosses the membrane as a helical span at residues 96 to 116 (PFTIIFLLTVGAFIAVAVLTL). At 117–143 (RGWSLSPTSNGSGIYDGDNTHTLNTNA) the chain is on the extracellular side. N-linked (GlcNAc...) asparagine glycosylation occurs at N126. The chain crosses the membrane as a helical span at residues 144-164 (AILLLISCGVAVALSVFGLVL). The Cytoplasmic segment spans residues 165–170 (AGMYTK). The helical transmembrane segment at 171–191 (FFIYAAMILNTVVGLGTAITY) threads the bilayer. Residues 192–196 (LVLRH) lie on the Extracellular side of the membrane. A helical transmembrane segment spans residues 197 to 217 (WSAGIVFMIFTILTAVCYWLM). Residues 218-243 (RSRIPFSVAVLRTVMSVMKKHPQTWL) are Cytoplasmic-facing. Residues 244 to 264 (VSLLGTIVSAAFSVIFSVVLV) form a helical membrane-spanning segment. Residues 265–288 (ATYIKYDPKSENGGCDVSGGSCSR) are Extracellular-facing. Residues 289 to 309 (GKLIGILVLVFFCGFYISEVI) traverse the membrane as a helical segment. Residues 310–346 (RNVIHCTIAGIYGCWYYFSKSDQGMPRWPAFGSLKRA) lie on the Cytoplasmic side of the membrane. The helical transmembrane segment at 347–367 (LTTSFGSICFGSLIVSLIQLL) threads the bilayer. Residues 368–385 (RQIIQLLRNGIISGISDS) are Extracellular-facing. A helical transmembrane segment spans residues 386–406 (GWMQCLWLILDAVVGVFEWMA). Over 407 to 450 (EYFNHYAYCFIALYGKPYLRAAKETWHMLREKGIDALINDNLIN) the chain is Cytoplasmic. A helical membrane pass occupies residues 451–471 (LALGFYTLFVGYTTALFSYLF). At 472–483 (LRFTKPDYNSGG) the chain is on the extracellular side. Residues 484–504 (GFNAVLMAFSFLIAIQLTHVA) form a helical membrane-spanning segment. At 505-553 (TETIRSGTATFFVALGNDPEIFRVSYPQRFDEIFRAYPDVLNKLSHQHV) the chain is on the cytoplasmic side.

Belongs to the CTL (choline transporter-like) family.

The protein localises to the cell membrane. Functionally, probably involved in transport through the plasma membrane. The polypeptide is Protein PNS1 (PNS1) (Eremothecium gossypii (strain ATCC 10895 / CBS 109.51 / FGSC 9923 / NRRL Y-1056) (Yeast)).